A 409-amino-acid polypeptide reads, in one-letter code: FBD-associated F-box protein At4g10400 (409 aa).

One can recognise an F-box domain in the interval 1 to 47 (MDRISGLPDEVLVKILSFVPTKVAVSTSILSKRWEFLWMWLTKLKFG). In terms of domain architecture, FBD spans 330-379 (SWNQPSIVPECMLSSLQKFTWFKYLGRPQDRDIAVYILKNACRLRTATIK).

The sequence is that of FBD-associated F-box protein At4g10400 from Arabidopsis thaliana (Mouse-ear cress).